Here is a 177-residue protein sequence, read N- to C-terminus: Large ribosomal subunit protein uL6 (177 aa).

It belongs to the universal ribosomal protein uL6 family. In terms of assembly, part of the 50S ribosomal subunit.

In terms of biological role, this protein binds to the 23S rRNA, and is important in its secondary structure. It is located near the subunit interface in the base of the L7/L12 stalk, and near the tRNA binding site of the peptidyltransferase center. This Pseudomonas entomophila (strain L48) protein is Large ribosomal subunit protein uL6.